The following is a 586-amino-acid chain: Malonate--CoA ligase ACSF3, mitochondrial (586 aa).

The N-terminal 89 residues, 1-89 (MPLPYVGMAL…SREICQLRAC (89 aa)), are a transit peptide targeting the mitochondrion. Residues 203-211 (TSGTTGRPK), aspartate 457, arginine 471, and lysine 563 contribute to the ATP site.

Belongs to the ATP-dependent AMP-binding enzyme family.

The protein resides in the mitochondrion. The enzyme catalyses tetracosanoate + ATP + CoA = tetracosanoyl-CoA + AMP + diphosphate. The catalysed reaction is malonate + ATP + CoA = malonyl-CoA + AMP + diphosphate. Its function is as follows. Catalyzes the initial reaction in intramitochondrial fatty acid synthesis, by activating malonate and methylmalonate, but not acetate, into their respective CoA thioester. May have some preference toward very-long-chain substrates. The chain is Malonate--CoA ligase ACSF3, mitochondrial from Bos taurus (Bovine).